The primary structure comprises 612 residues: Calcium-dependent protein kinase 27 (612 aa).

G2 carries N-myristoyl glycine lipidation. The segment at 23–132 (PRHAAPSSPS…AHIKRISSAG (110 aa)) is disordered. The segment covering 28-50 (PSSPSQPTTTSRSIPVVLPSAPS) has biased composition (low complexity). A compositionally biased stretch (pro residues) spans 51-100 (SKPPPPTQTAPPVPVVISEPPPPQPQPEPQPAAPSQPPPPQEQPSPPPPA). The segment covering 117–127 (SRAKKPAHIKR) has biased composition (basic residues). Residues 150–408 (YSLGRKLGQG…AHEVLCHPWL (259 aa)) enclose the Protein kinase domain. Residues 156–164 (LGQGQFGTT) and K179 contribute to the ATP site. The active-site Proton acceptor is the D274. Residues 414 to 444 (APDKPLDSAVLSRLRQFSAMNKLKKMALRVI) form an autoinhibitory domain region. 4 EF-hand domains span residues 451–486 (EEIA…VGAN), 487–522 (MKES…LNKV), 523–558 (ERED…FGIE), and 561–592 (RLED…TTTG). 20 residues coordinate Ca(2+): D464, D466, S468, Q470, E475, D500, D502, S504, T506, E511, D536, D538, S540, Y542, E547, D570, D572, D574, R576, and E581.

Belongs to the protein kinase superfamily. Ser/Thr protein kinase family. CDPK subfamily.

It localises to the membrane. It carries out the reaction L-seryl-[protein] + ATP = O-phospho-L-seryl-[protein] + ADP + H(+). The catalysed reaction is L-threonyl-[protein] + ATP = O-phospho-L-threonyl-[protein] + ADP + H(+). Its activity is regulated as follows. Activated by calcium. Autophosphorylation may play an important role in the regulation of the kinase activity. In terms of biological role, may play a role in signal transduction pathways that involve calcium as a second messenger. In Oryza sativa subsp. japonica (Rice), this protein is Calcium-dependent protein kinase 27.